A 694-amino-acid polypeptide reads, in one-letter code: Elongation factor G (694 aa).

Residues Ser-9–Lys-288 enclose the tr-type G domain. GTP is bound by residues Ala-18–Thr-25, Asp-82–His-86, and Asn-136–Asp-139.

This sequence belongs to the TRAFAC class translation factor GTPase superfamily. Classic translation factor GTPase family. EF-G/EF-2 subfamily.

It is found in the cytoplasm. In terms of biological role, catalyzes the GTP-dependent ribosomal translocation step during translation elongation. During this step, the ribosome changes from the pre-translocational (PRE) to the post-translocational (POST) state as the newly formed A-site-bound peptidyl-tRNA and P-site-bound deacylated tRNA move to the P and E sites, respectively. Catalyzes the coordinated movement of the two tRNA molecules, the mRNA and conformational changes in the ribosome. The chain is Elongation factor G from Chlamydia abortus (strain DSM 27085 / S26/3) (Chlamydophila abortus).